Consider the following 196-residue polypeptide: Probable nicotinate-nucleotide adenylyltransferase (196 aa).

The protein belongs to the NadD family.

The enzyme catalyses nicotinate beta-D-ribonucleotide + ATP + H(+) = deamido-NAD(+) + diphosphate. It functions in the pathway cofactor biosynthesis; NAD(+) biosynthesis; deamido-NAD(+) from nicotinate D-ribonucleotide: step 1/1. Functionally, catalyzes the reversible adenylation of nicotinate mononucleotide (NaMN) to nicotinic acid adenine dinucleotide (NaAD). The protein is Probable nicotinate-nucleotide adenylyltransferase of Thermotoga petrophila (strain ATCC BAA-488 / DSM 13995 / JCM 10881 / RKU-1).